The chain runs to 471 residues: tRNA-2-methylthio-N(6)-dimethylallyladenosine synthase (471 aa).

The region spanning 36 to 154 (KTYHIITYGC…FPQLLYKAIT (119 aa)) is the MTTase N-terminal domain. 6 residues coordinate [4Fe-4S] cluster: cysteine 45, cysteine 81, cysteine 115, cysteine 191, cysteine 195, and cysteine 198. One can recognise a Radical SAM core domain in the interval 177 to 407 (RREGVSAFVN…VKLVEEIALK (231 aa)). One can recognise a TRAM domain in the interval 410–471 (QQMLGKVCEI…SRHWLYGEVI (62 aa)).

It belongs to the methylthiotransferase family. MiaB subfamily. As to quaternary structure, monomer. It depends on [4Fe-4S] cluster as a cofactor.

The protein resides in the cytoplasm. The catalysed reaction is N(6)-dimethylallyladenosine(37) in tRNA + (sulfur carrier)-SH + AH2 + 2 S-adenosyl-L-methionine = 2-methylsulfanyl-N(6)-dimethylallyladenosine(37) in tRNA + (sulfur carrier)-H + 5'-deoxyadenosine + L-methionine + A + S-adenosyl-L-homocysteine + 2 H(+). In terms of biological role, catalyzes the methylthiolation of N6-(dimethylallyl)adenosine (i(6)A), leading to the formation of 2-methylthio-N6-(dimethylallyl)adenosine (ms(2)i(6)A) at position 37 in tRNAs that read codons beginning with uridine. The protein is tRNA-2-methylthio-N(6)-dimethylallyladenosine synthase of Caldicellulosiruptor saccharolyticus (strain ATCC 43494 / DSM 8903 / Tp8T 6331).